A 389-amino-acid polypeptide reads, in one-letter code: Formate-dependent phosphoribosylglycinamide formyltransferase (389 aa).

N(1)-(5-phospho-beta-D-ribosyl)glycinamide-binding positions include 15 to 16 (EL) and glutamate 75. Residues arginine 107, lysine 148, 153 to 158 (SSGKGQ), 188 to 191 (EEFL), and glutamate 196 contribute to the ATP site. The ATP-grasp domain occupies 112 to 302 (DLAAGELALR…EFELHLRAVL (191 aa)). 2 residues coordinate Mg(2+): glutamate 261 and glutamate 273. N(1)-(5-phospho-beta-D-ribosyl)glycinamide contacts are provided by residues aspartate 280, lysine 350, and 357-358 (RR).

It belongs to the PurK/PurT family. As to quaternary structure, homodimer.

It catalyses the reaction N(1)-(5-phospho-beta-D-ribosyl)glycinamide + formate + ATP = N(2)-formyl-N(1)-(5-phospho-beta-D-ribosyl)glycinamide + ADP + phosphate + H(+). Its pathway is purine metabolism; IMP biosynthesis via de novo pathway; N(2)-formyl-N(1)-(5-phospho-D-ribosyl)glycinamide from N(1)-(5-phospho-D-ribosyl)glycinamide (formate route): step 1/1. Functionally, involved in the de novo purine biosynthesis. Catalyzes the transfer of formate to 5-phospho-ribosyl-glycinamide (GAR), producing 5-phospho-ribosyl-N-formylglycinamide (FGAR). Formate is provided by PurU via hydrolysis of 10-formyl-tetrahydrofolate. This is Formate-dependent phosphoribosylglycinamide formyltransferase from Synechococcus sp. (strain WH7803).